Consider the following 125-residue polypeptide: Small ribosomal subunit protein uS13 (125 aa).

The disordered stretch occupies residues 91 to 125 (HRRSLPVRGQNTQTNARTRKGKRKTVAGKKKAARK). The segment covering 107–125 (RTRKGKRKTVAGKKKAARK) has biased composition (basic residues).

It belongs to the universal ribosomal protein uS13 family. Part of the 30S ribosomal subunit. Forms a loose heterodimer with protein S19. Forms two bridges to the 50S subunit in the 70S ribosome.

Its function is as follows. Located at the top of the head of the 30S subunit, it contacts several helices of the 16S rRNA. In the 70S ribosome it contacts the 23S rRNA (bridge B1a) and protein L5 of the 50S subunit (bridge B1b), connecting the 2 subunits; these bridges are implicated in subunit movement. Contacts the tRNAs in the A and P-sites. The polypeptide is Small ribosomal subunit protein uS13 (Chlorobium phaeovibrioides (strain DSM 265 / 1930) (Prosthecochloris vibrioformis (strain DSM 265))).